The sequence spans 375 residues: MHCPVIELAQQLIRRPSLSPDDAGCQAILIARLQALGFTIETMNIGDTLNFWAWRGKGETLAFAGHTDVVPTGDVTRWNNPPFEPTIRDGMLYGRGAADMKGSLAAMVVAAERFVANYPQHEGRLAFLITSDEEASATNGTVKVVEALMARHERLDYCLVGEPSSTEVVGDVAKNGRRGSITANLTIHGVQGHVAYPHLADNPVHRAMPALNELVATEWDKGNEFFPPTSMQIANVQAGTGSNNVIPGDCFVQFNFRFSTELTDVMIQQKVQALLERHQLRYSIEWKLSGQPFLTSRGKLVDAVVNAVEHYNEIRPQLLTTGGTSDGRFIARMGAQVVELGPVNATIHKVDECVKAADLQLLSRMYQRIMEQLVA.

Residue His-66 participates in Zn(2+) binding. Asp-68 is an active-site residue. Asp-99 serves as a coordination point for Zn(2+). Glu-133 (proton acceptor) is an active-site residue. The Zn(2+) site is built by Glu-134, Glu-162, and His-348.

This sequence belongs to the peptidase M20A family. DapE subfamily. In terms of assembly, homodimer. Zn(2+) is required as a cofactor. Requires Co(2+) as cofactor.

The catalysed reaction is N-succinyl-(2S,6S)-2,6-diaminopimelate + H2O = (2S,6S)-2,6-diaminopimelate + succinate. It functions in the pathway amino-acid biosynthesis; L-lysine biosynthesis via DAP pathway; LL-2,6-diaminopimelate from (S)-tetrahydrodipicolinate (succinylase route): step 3/3. Catalyzes the hydrolysis of N-succinyl-L,L-diaminopimelic acid (SDAP), forming succinate and LL-2,6-diaminopimelate (DAP), an intermediate involved in the bacterial biosynthesis of lysine and meso-diaminopimelic acid, an essential component of bacterial cell walls. This Erwinia tasmaniensis (strain DSM 17950 / CFBP 7177 / CIP 109463 / NCPPB 4357 / Et1/99) protein is Succinyl-diaminopimelate desuccinylase.